The chain runs to 460 residues: 5-hydroxytryptamine receptor 2C (460 aa).

The signal sequence occupies residues 1–32 (MVNLGNAVRSLLMHLIGLLVWQFDISISPVAA). Residues 33 to 56 (IVTDTFNSSDGGRLFQFPDGVQNW) are Extracellular-facing. A helical membrane pass occupies residues 57–81 (PALSIVVIIIMTIGGNILVIMAVSM). The Cytoplasmic portion of the chain corresponds to 82-87 (EKKLHN). The helical transmembrane segment at 88-112 (ATNYFLMSLAIADMLVGLLVMPLSL) threads the bilayer. The Extracellular segment spans residues 113 to 129 (LAILYDYVWPLPRYLCP). An intrachain disulfide couples cysteine 128 to cysteine 208. A helical transmembrane segment spans residues 130–152 (VWISLDVLFSTASIMHLCAISLD). Threonine 140 provides a ligand contact to ergotamine. The DRY motif; important for ligand-induced conformation changes signature appears at 152–154 (DRY). The Cytoplasmic segment spans residues 153 to 168 (RYVAIRNPIEHSRFNS). Residues 169–190 (RTKAIMKIAIVWAISIGVSVPI) form a helical membrane-spanning segment. At 191-214 (PVIGLRDESKVFVNNTTCVLNDPN) the chain is on the extracellular side. N-linked (GlcNAc...) asparagine glycans are attached at residues asparagine 204 and asparagine 205. Position 210 (leucine 210) interacts with ergotamine. The helical transmembrane segment at 215 to 237 (FVLIGSFVAFFIPLTIMVITYFL) threads the bilayer. Residues 238-313 (TIYVLRRQTL…AINNEKKASK (76 aa)) lie on the Cytoplasmic side of the membrane. Residues 276-301 (EEENAPNPNPDQKPRRKKKEKRPRGT) form a disordered region. Basic residues predominate over residues 289–299 (PRRKKKEKRPR). A helical transmembrane segment spans residues 314-338 (VLGIVFFVFLIMWCPFFITNILSVL). Cysteine 339 and cysteine 343 are joined by a disulfide. Residues 339 to 349 (CGKACNQKLME) are Extracellular-facing. The chain crosses the membrane as a helical span at residues 350-372 (KLLNVFVWIGYVCSGINPLVYTL). Positions 366-370 (NPLVY) match the NPxxY motif; important for ligand-induced conformation changes and signaling motif. At 373–460 (FNKIYRRAFS…NVVSERISSV (88 aa)) the chain is on the cytoplasmic side. The PDZ-binding motif lies at 458 to 460 (SSV).

Belongs to the G-protein coupled receptor 1 family. Interacts with MPDZ. Interacts with ARRB2. Interacts with MPP3; this interaction stabilizes the receptor at the plasma membrane and prevents the desensitization of the HTR2C receptor-mediated calcium response.

It is found in the cell membrane. In terms of biological role, G-protein coupled receptor for 5-hydroxytryptamine (serotonin). Also functions as a receptor for various drugs and psychoactive substances, including ergot alkaloid derivatives, 1-2,5,-dimethoxy-4-iodophenyl-2-aminopropane (DOI) and lysergic acid diethylamide (LSD). Ligand binding causes a conformation change that triggers signaling via guanine nucleotide-binding proteins (G proteins) and modulates the activity of downstream effectors. HTR2C is coupled to G(q)/G(11) G alpha proteins and activates phospholipase C-beta, releasing diacylglycerol (DAG) and inositol 1,4,5-trisphosphate (IP3) second messengers that modulate the activity of phosphatidylinositol 3-kinase and promote the release of Ca(2+) ions from intracellular stores, respectively. Beta-arrestin family members inhibit signaling via G proteins and mediate activation of alternative signaling pathways. Regulates neuronal activity via the activation of short transient receptor potential calcium channels in the brain, and thereby modulates the activation of pro-opiomelanocortin neurons and the release of CRH that then regulates the release of corticosterone. Plays a role in the regulation of appetite and eating behavior, responses to anxiogenic stimuli and stress. Plays a role in insulin sensitivity and glucose homeostasis. This Rattus norvegicus (Rat) protein is 5-hydroxytryptamine receptor 2C.